The chain runs to 129 residues: Cytochrome c oxidase subunit 13, mitochondrial (129 aa).

The transit peptide at 1–9 directs the protein to the mitochondrion; it reads MFRQCAKRY. Residues 10–43 lie on the Mitochondrial matrix side of the membrane; that stretch reads ASSLPPNALKPAFGPPDKVAAQKFKESLMATEKH. Residues 44-71 traverse the membrane as a helical segment; sequence AKDTSNMWVKISVWVALPAIALTAVNTY. Over 72–129 the chain is Mitochondrial intermembrane; that stretch reads FVEKEHAEHREHLKHVPDSEWPRDYEFMNIRSKPFFWGDGDKTLFWNPVVNRHIEHDD.

The protein belongs to the cytochrome c oxidase subunit 6A family. In terms of assembly, component of the cytochrome c oxidase (complex IV, CIV), a multisubunit enzyme composed of 12 subunits. The complex is composed of a catalytic core of 3 subunits COX1, COX2 and COX3, encoded in the mitochondrial DNA, and 9 supernumerary subunits COX4, COX5A (or COX5B), COX6, COX7, COX8, COX9, COX12, COX13 and COX26, which are encoded in the nuclear genome. The complex exists as a monomer or a dimer and forms supercomplexes (SCs) in the inner mitochondrial membrane with a dimer of ubiquinol-cytochrome c oxidoreductase (cytochrome b-c1 complex, complex III, CIII), resulting in 2 different assemblies (supercomplexes III(2)IV and III(2)IV(2)). COX13 interacts with COX1 and COX3 on the intermembrane space (IMS) and COX4 on the matrix side.

Its subcellular location is the mitochondrion inner membrane. The protein operates within energy metabolism; oxidative phosphorylation. Its function is as follows. Component of the cytochrome c oxidase, the last enzyme in the mitochondrial electron transport chain which drives oxidative phosphorylation. The respiratory chain contains 3 multisubunit complexes succinate dehydrogenase (complex II, CII), ubiquinol-cytochrome c oxidoreductase (cytochrome b-c1 complex, complex III, CIII) and cytochrome c oxidase (complex IV, CIV), that cooperate to transfer electrons derived from NADH and succinate to molecular oxygen, creating an electrochemical gradient over the inner membrane that drives transmembrane transport and the ATP synthase. Cytochrome c oxidase is the component of the respiratory chain that catalyzes the reduction of oxygen to water. Electrons originating from reduced cytochrome c in the intermembrane space (IMS) are transferred via the dinuclear copper A center (CU(A)) of COX2 and heme A of COX1 to the active site in COX1, a binuclear center (BNC) formed by heme A3 and copper B (CU(B)). The BNC reduces molecular oxygen to 2 water molecules using 4 electrons from cytochrome c in the IMS and 4 protons from the mitochondrial matrix. This chain is Cytochrome c oxidase subunit 13, mitochondrial (COX13), found in Saccharomyces cerevisiae (strain ATCC 204508 / S288c) (Baker's yeast).